The primary structure comprises 88 residues: Small ribosomal subunit protein uS15 (88 aa).

The protein belongs to the universal ribosomal protein uS15 family. In terms of assembly, part of the 30S ribosomal subunit. Forms a bridge to the 50S subunit in the 70S ribosome, contacting the 23S rRNA.

One of the primary rRNA binding proteins, it binds directly to 16S rRNA where it helps nucleate assembly of the platform of the 30S subunit by binding and bridging several RNA helices of the 16S rRNA. Its function is as follows. Forms an intersubunit bridge (bridge B4) with the 23S rRNA of the 50S subunit in the ribosome. This is Small ribosomal subunit protein uS15 from Syntrophus aciditrophicus (strain SB).